A 404-amino-acid chain; its full sequence is Cysteine desulfurase IscS (404 aa).

Residues 75 to 76 (AT), Asn155, Gln183, and 203 to 205 (SAH) each bind pyridoxal 5'-phosphate. Position 206 is an N6-(pyridoxal phosphate)lysine (Lys206). A pyridoxal 5'-phosphate-binding site is contributed by Thr243. Cys328 functions as the Cysteine persulfide intermediate in the catalytic mechanism. Cys328 is a [2Fe-2S] cluster binding site.

Belongs to the class-V pyridoxal-phosphate-dependent aminotransferase family. NifS/IscS subfamily. In terms of assembly, homodimer. Forms a heterotetramer with IscU, interacts with other sulfur acceptors. It depends on pyridoxal 5'-phosphate as a cofactor.

It localises to the cytoplasm. It catalyses the reaction (sulfur carrier)-H + L-cysteine = (sulfur carrier)-SH + L-alanine. The protein operates within cofactor biosynthesis; iron-sulfur cluster biosynthesis. In terms of biological role, master enzyme that delivers sulfur to a number of partners involved in Fe-S cluster assembly, tRNA modification or cofactor biosynthesis. Catalyzes the removal of elemental sulfur atoms from cysteine to produce alanine. Functions as a sulfur delivery protein for Fe-S cluster synthesis onto IscU, an Fe-S scaffold assembly protein, as well as other S acceptor proteins. The protein is Cysteine desulfurase IscS of Vibrio vulnificus (strain CMCP6).